Consider the following 383-residue polypeptide: MKNITLLGATGSIGKSTLSVVDLHPDKFNIFALSANTNWKQMIKLCNKYQPSYAIMVDEQSAEKLSNAITTDIQVLSSVQALDKIVTHQDTDYVMAAIVGAIGMSSALCGAKAGKRIMLANKESLVLAGDIFMKTVKEFNAELIPVDSEHSAIFQCLKSGKSGLNKIQLTASGGPFLHTPISQFKSITPDEACAHPNWSMGRKISVDSATMMNKGLEVIEAHYLFSLTPKQIDVVIHPQSIVHSSVFYKDGSTLSQLGNPDMRTVIAYAMSYPKRMNSGVSELDLTSTASLEFYQPDFEKFTCLKLAFEALNKGGNAMITMNAANEIAVKYFLNHQISFLDIPKIIDQTLSTMKHTTLNSLEEVINNDLIAREIAHEIIKQYG.

Residues Thr-10, Gly-11, Ser-12, Ile-13, Asn-38, and Asn-121 each coordinate NADPH. A 1-deoxy-D-xylulose 5-phosphate-binding site is contributed by Lys-122. Position 123 (Glu-123) interacts with NADPH. Asp-147 is a Mn(2+) binding site. 4 residues coordinate 1-deoxy-D-xylulose 5-phosphate: Ser-148, Glu-149, Ser-172, and His-195. Glu-149 serves as a coordination point for Mn(2+). Position 201 (Gly-201) interacts with NADPH. The 1-deoxy-D-xylulose 5-phosphate site is built by Ser-208, Asn-213, Lys-214, and Glu-217. Glu-217 lines the Mn(2+) pocket.

The protein belongs to the DXR family. Mg(2+) is required as a cofactor. Mn(2+) serves as cofactor.

It carries out the reaction 2-C-methyl-D-erythritol 4-phosphate + NADP(+) = 1-deoxy-D-xylulose 5-phosphate + NADPH + H(+). The protein operates within isoprenoid biosynthesis; isopentenyl diphosphate biosynthesis via DXP pathway; isopentenyl diphosphate from 1-deoxy-D-xylulose 5-phosphate: step 1/6. Catalyzes the NADPH-dependent rearrangement and reduction of 1-deoxy-D-xylulose-5-phosphate (DXP) to 2-C-methyl-D-erythritol 4-phosphate (MEP). The protein is 1-deoxy-D-xylulose 5-phosphate reductoisomerase of Vesicomyosocius okutanii subsp. Calyptogena okutanii (strain HA).